Consider the following 182-residue polypeptide: Small ribosomal subunit protein uS5 (182 aa).

The 64-residue stretch at 16 to 79 folds into the S5 DRBM domain; the sequence is FVDRLVHINR…ESAKRGMIYV (64 aa).

This sequence belongs to the universal ribosomal protein uS5 family. Part of the 30S ribosomal subunit. Contacts proteins S4 and S8.

With S4 and S12 plays an important role in translational accuracy. Its function is as follows. Located at the back of the 30S subunit body where it stabilizes the conformation of the head with respect to the body. The chain is Small ribosomal subunit protein uS5 from Bartonella henselae (strain ATCC 49882 / DSM 28221 / CCUG 30454 / Houston 1) (Rochalimaea henselae).